We begin with the raw amino-acid sequence, 52 residues long: Large ribosomal subunit protein bL33 (52 aa).

This sequence belongs to the bacterial ribosomal protein bL33 family.

This chain is Large ribosomal subunit protein bL33, found in Chlamydia abortus (strain DSM 27085 / S26/3) (Chlamydophila abortus).